A 524-amino-acid polypeptide reads, in one-letter code: Gamma-taxilin (524 aa).

Residues 1-10 are compositionally biased toward basic and acidic residues; it reads MATRLEEVTR. Disordered stretches follow at residues 1-37 and 64-86; these read MATR…KFEI and LQHQ…DEGS. Omega-N-methylarginine occurs at positions 12 and 24. Residues Ser79, Ser86, and Ser97 each carry the phosphoserine modification. Residues 106–115 show a composition bias toward basic and acidic residues; sequence REEIPGREAR. The tract at residues 106–130 is disordered; that stretch reads REEIPGREARTGPPDGQQDSECSRN. A coiled-coil region spans residues 153–465; it reads EEKLAALCKK…KEQVSIKAAD (313 aa). Tyr283 is modified (phosphotyrosine). Positions 501 to 524 are disordered; that stretch reads VCEKSAAQKPSSSGSPAQGIESVD. Residue Ser512 is modified to Phosphoserine.

The protein belongs to the taxilin family. In terms of assembly, binds to the C-terminal coiled coil region of syntaxin family members STX1A, STX3A and STX4A. Forms a heterodimer with ATF4 in osteoblasts.

The protein resides in the nucleus membrane. Its subcellular location is the cytoplasm. It localises to the cytosol. May be involved in intracellular vesicle traffic. Inhibits ATF4-mediated transcription, possibly by dimerizing with ATF4 to form inactive dimers that cannot bind DNA. May be involved in regulating bone mass density through an ATF4-dependent pathway. May be involved in cell cycle progression. This Mus musculus (Mouse) protein is Gamma-taxilin (Txlng).